A 100-amino-acid polypeptide reads, in one-letter code: Aspartyl/glutamyl-tRNA(Asn/Gln) amidotransferase subunit C (100 aa).

It belongs to the GatC family. As to quaternary structure, heterotrimer of A, B and C subunits.

The enzyme catalyses L-glutamyl-tRNA(Gln) + L-glutamine + ATP + H2O = L-glutaminyl-tRNA(Gln) + L-glutamate + ADP + phosphate + H(+). It catalyses the reaction L-aspartyl-tRNA(Asn) + L-glutamine + ATP + H2O = L-asparaginyl-tRNA(Asn) + L-glutamate + ADP + phosphate + 2 H(+). Functionally, allows the formation of correctly charged Asn-tRNA(Asn) or Gln-tRNA(Gln) through the transamidation of misacylated Asp-tRNA(Asn) or Glu-tRNA(Gln) in organisms which lack either or both of asparaginyl-tRNA or glutaminyl-tRNA synthetases. The reaction takes place in the presence of glutamine and ATP through an activated phospho-Asp-tRNA(Asn) or phospho-Glu-tRNA(Gln). In Petrotoga mobilis (strain DSM 10674 / SJ95), this protein is Aspartyl/glutamyl-tRNA(Asn/Gln) amidotransferase subunit C.